A 294-amino-acid polypeptide reads, in one-letter code: MLENLSTEHRNEKTMNLDEMNIKEILQRMNEEDRTVALAVEKEIEHIEKVVRVVIQSFEEEGRLIYIGAGTSGRLGILDAVECPPTFGTDDKMVQGFIAGGLKAFTKAVEGAEDREELAEEDLKSIGLNEKDTVIGIAASGRTPYVIGGLKYANSVGASTASISCNKNAEISKYAKLNVEVETGAEILTGSTRLKAGTAQKLVLNMISTASMIGVGKVYKNLMVDVQSTNEKLVERSKRIIVEATGVSYEVAAEHYEKAERNVKAAIVMVLLQCEYGEALEKLKEAKGFVKKAL.

The 164-residue stretch at 54-217 (VIQSFEEEGR…STASMIGVGK (164 aa)) folds into the SIS domain. Residue E82 is the Proton donor of the active site. The active site involves E113.

The protein belongs to the GCKR-like family. MurNAc-6-P etherase subfamily. As to quaternary structure, homodimer.

It catalyses the reaction N-acetyl-D-muramate 6-phosphate + H2O = N-acetyl-D-glucosamine 6-phosphate + (R)-lactate. The protein operates within amino-sugar metabolism; N-acetylmuramate degradation. In terms of biological role, specifically catalyzes the cleavage of the D-lactyl ether substituent of MurNAc 6-phosphate, producing GlcNAc 6-phosphate and D-lactate. The protein is N-acetylmuramic acid 6-phosphate etherase of Bacillus cereus (strain AH820).